The chain runs to 364 residues: tRNA 2-selenouridine synthase (364 aa).

The region spanning Leu-14–Ile-137 is the Rhodanese domain. Cys-97 serves as the catalytic S-selanylcysteine intermediate.

It belongs to the SelU family. As to quaternary structure, monomer.

The enzyme catalyses 5-methylaminomethyl-2-thiouridine(34) in tRNA + selenophosphate + (2E)-geranyl diphosphate + H2O + H(+) = 5-methylaminomethyl-2-selenouridine(34) in tRNA + (2E)-thiogeraniol + phosphate + diphosphate. The catalysed reaction is 5-methylaminomethyl-2-thiouridine(34) in tRNA + (2E)-geranyl diphosphate = 5-methylaminomethyl-S-(2E)-geranyl-thiouridine(34) in tRNA + diphosphate. It catalyses the reaction 5-methylaminomethyl-S-(2E)-geranyl-thiouridine(34) in tRNA + selenophosphate + H(+) = 5-methylaminomethyl-2-(Se-phospho)selenouridine(34) in tRNA + (2E)-thiogeraniol. It carries out the reaction 5-methylaminomethyl-2-(Se-phospho)selenouridine(34) in tRNA + H2O = 5-methylaminomethyl-2-selenouridine(34) in tRNA + phosphate. In terms of biological role, involved in the post-transcriptional modification of the uridine at the wobble position (U34) of tRNA(Lys), tRNA(Glu) and tRNA(Gln). Catalyzes the conversion of 2-thiouridine (S2U-RNA) to 2-selenouridine (Se2U-RNA). Acts in a two-step process involving geranylation of 2-thiouridine (S2U) to S-geranyl-2-thiouridine (geS2U) and subsequent selenation of the latter derivative to 2-selenouridine (Se2U) in the tRNA chain. The protein is tRNA 2-selenouridine synthase of Shigella dysenteriae serotype 1 (strain Sd197).